Consider the following 336-residue polypeptide: N-lysine methyltransferase KMT5A (336 aa).

The segment at 1 to 112 is disordered; sequence MGRGKKMSKP…KPSEQRETEC (112 aa). Over residues 67–93 the composition is skewed to basic and acidic residues; sequence SVAHHESKCPGKPLTETRKKAEVEKKR. An SET domain is found at 200–321; it reads EGMKMDMITG…VGEELLYDYG (122 aa). Residues 210-212, Tyr-255, and 282-283 contribute to the S-adenosyl-L-methionine site; these read KGR and NH.

This sequence belongs to the class V-like SAM-binding methyltransferase superfamily. Histone-lysine methyltransferase family. PR/SET subfamily.

It is found in the nucleus. The protein localises to the chromosome. It catalyses the reaction L-lysyl(20)-[histone H4] + S-adenosyl-L-methionine = N(6)-methyl-L-lysyl(20)-[histone H4] + S-adenosyl-L-homocysteine + H(+). The enzyme catalyses L-lysyl-[protein] + S-adenosyl-L-methionine = N(6)-methyl-L-lysyl-[protein] + S-adenosyl-L-homocysteine + H(+). Its function is as follows. Protein-lysine N-methyltransferase that monomethylates both histones and non-histone proteins. Specifically monomethylates 'Lys-20' of histone H4 (H4K20me1). H4K20me1 is enriched during mitosis and represents a specific tag for epigenetic transcriptional repression. Mainly functions in euchromatin regions, thereby playing a central role in the silencing of euchromatic genes. Required for cell proliferation, probably by contributing to the maintenance of proper higher-order structure of DNA during mitosis. Involved in chromosome condensation and proper cytokinesis. Nucleosomes are preferred as substrate compared to free histones. Mediates monomethylation of p53/TP53 at 'Lys-382', leading to repress p53/TP53-target genes. Plays a negative role in TGF-beta response regulation and a positive role in cell migration. The sequence is that of N-lysine methyltransferase KMT5A from Xenopus tropicalis (Western clawed frog).